We begin with the raw amino-acid sequence, 255 residues long: Ribonuclease HII (255 aa).

The region spanning 72–255 is the RNase H type-2 domain; the sequence is AIICGIDEVG…KSFEPIKSLL (184 aa). The a divalent metal cation site is built by D78, E79, and D170.

This sequence belongs to the RNase HII family. It depends on Mn(2+) as a cofactor. Requires Mg(2+) as cofactor.

It localises to the cytoplasm. The enzyme catalyses Endonucleolytic cleavage to 5'-phosphomonoester.. Its function is as follows. Endonuclease that specifically degrades the RNA of RNA-DNA hybrids. The sequence is that of Ribonuclease HII from Staphylococcus aureus (strain MRSA252).